A 400-amino-acid chain; its full sequence is NADH-ubiquinone oxidoreductase 49 kDa subunit (400 aa).

It belongs to the complex I 49 kDa subunit family.

It localises to the mitochondrion. It carries out the reaction a ubiquinone + NADH + 5 H(+)(in) = a ubiquinol + NAD(+) + 4 H(+)(out). Functionally, core subunit of the mitochondrial membrane respiratory chain NADH dehydrogenase (Complex I) that is believed to belong to the minimal assembly required for catalysis. Complex I functions in the transfer of electrons from NADH to the respiratory chain. The immediate electron acceptor for the enzyme is believed to be ubiquinone. Component of the iron-sulfur (IP) fragment of the enzyme. Component of the iron-sulfur (IP) fragment of the enzyme. This is NADH-ubiquinone oxidoreductase 49 kDa subunit (NAD7) from Prototheca wickerhamii.